The chain runs to 248 residues: Killer cell lectin-like receptor subfamily I member 1 (248 aa).

Over 1–80 (MLHSKRREYT…RQGPKSTVWR (80 aa)) the chain is Cytoplasmic. Short sequence motifs (ITIM motif) lie at residues 16–21 (VTYTEL) and 47–52 (LKYGEL). The helical; Signal-anchor for type II membrane protein transmembrane segment at 81-101 (VVTGMLGALCVVLMTTTGILL) threads the bilayer. The Extracellular segment spans residues 102–248 (PKLFSSQEEQ…KKSYICEFNI (147 aa)). Intrachain disulfides connect cysteine 132–cysteine 145, cysteine 161–cysteine 244, and cysteine 223–cysteine 236. A C-type lectin domain is found at 139 to 245 (FGNNFYCVFK…CSAKKSYICE (107 aa)). 3 N-linked (GlcNAc...) asparagine glycosylation sites follow: asparagine 197, asparagine 214, and asparagine 220.

As to quaternary structure, heterodimer with KLRE1. Interacts with PTPN6. In terms of tissue distribution, expressed in natural killer (NK) cells.

Its subcellular location is the cell membrane. Functionally, lectin-like receptor for natural killer (NK) cells. Heterodimer formation with KLRE1 mediates inhibition of NK cell cytolytic activity. The sequence is that of Killer cell lectin-like receptor subfamily I member 1 from Mus musculus (Mouse).